A 312-amino-acid chain; its full sequence is Protein-methionine-sulfoxide reductase catalytic subunit MsrP (312 aa).

The tat-type signal signal peptide spans 1 to 47 (MLIRRPPDLLPSEITPEPLARGRRALLKGLGAGAALAGLGLPQISQA). Residues Asn-74, 77 to 78 (YE), Cys-133, Thr-168, Asn-216, Arg-221, and 232 to 234 (SAK) each bind Mo-molybdopterin.

The protein belongs to the MsrP family. As to quaternary structure, heterodimer of a catalytic subunit (MsrP) and a heme-binding subunit (MsrQ). Requires Mo-molybdopterin as cofactor. Post-translationally, predicted to be exported by the Tat system. The position of the signal peptide cleavage has not been experimentally proven.

It localises to the periplasm. The enzyme catalyses L-methionyl-[protein] + a quinone + H2O = L-methionyl-(R)-S-oxide-[protein] + a quinol. In terms of biological role, part of the MsrPQ system that repairs oxidized periplasmic proteins containing methionine sulfoxide residues (Met-O), using respiratory chain electrons. Thus protects these proteins from oxidative-stress damage caused by reactive species of oxygen and chlorine generated by the host defense mechanisms. MsrPQ is essential for the maintenance of envelope integrity under bleach stress, rescuing a wide series of structurally unrelated periplasmic proteins from methionine oxidation. The catalytic subunit MsrP is non-stereospecific, being able to reduce both (R-) and (S-) diastereoisomers of methionine sulfoxide. Involved in protection against reactive chlorine species (RCS) generated by chlorite and hypochlorite. The chain is Protein-methionine-sulfoxide reductase catalytic subunit MsrP from Azospira oryzae (strain ATCC BAA-33 / DSM 13638 / PS) (Dechlorosoma suillum).